A 448-amino-acid polypeptide reads, in one-letter code: Probable glycine dehydrogenase (decarboxylating) subunit 1 (448 aa).

This sequence belongs to the GcvP family. N-terminal subunit subfamily. The glycine cleavage system is composed of four proteins: P, T, L and H. In this organism, the P 'protein' is a heterodimer of two subunits.

The catalysed reaction is N(6)-[(R)-lipoyl]-L-lysyl-[glycine-cleavage complex H protein] + glycine + H(+) = N(6)-[(R)-S(8)-aminomethyldihydrolipoyl]-L-lysyl-[glycine-cleavage complex H protein] + CO2. Functionally, the glycine cleavage system catalyzes the degradation of glycine. The P protein binds the alpha-amino group of glycine through its pyridoxal phosphate cofactor; CO(2) is released and the remaining methylamine moiety is then transferred to the lipoamide cofactor of the H protein. The polypeptide is Probable glycine dehydrogenase (decarboxylating) subunit 1 (Staphylococcus epidermidis (strain ATCC 35984 / DSM 28319 / BCRC 17069 / CCUG 31568 / BM 3577 / RP62A)).